The chain runs to 131 residues: Small ribosomal subunit protein uS8 (131 aa).

Belongs to the universal ribosomal protein uS8 family. As to quaternary structure, part of the 30S ribosomal subunit. Contacts proteins S5 and S12.

One of the primary rRNA binding proteins, it binds directly to 16S rRNA central domain where it helps coordinate assembly of the platform of the 30S subunit. The protein is Small ribosomal subunit protein uS8 of Hamiltonella defensa subsp. Acyrthosiphon pisum (strain 5AT).